The sequence spans 124 residues: Small ribosomal subunit protein uS12 (124 aa).

The interval 1–20 (MPTIQQLVRKGRTPKVVKTK) is disordered. Over residues 9–18 (RKGRTPKVVK) the composition is skewed to basic residues. A 3-methylthioaspartic acid modification is found at Asp89.

Belongs to the universal ribosomal protein uS12 family. As to quaternary structure, part of the 30S ribosomal subunit. Contacts proteins S8 and S17. May interact with IF1 in the 30S initiation complex.

In terms of biological role, with S4 and S5 plays an important role in translational accuracy. Interacts with and stabilizes bases of the 16S rRNA that are involved in tRNA selection in the A site and with the mRNA backbone. Located at the interface of the 30S and 50S subunits, it traverses the body of the 30S subunit contacting proteins on the other side and probably holding the rRNA structure together. The combined cluster of proteins S8, S12 and S17 appears to hold together the shoulder and platform of the 30S subunit. This Clavibacter michiganensis subsp. michiganensis (strain NCPPB 382) protein is Small ribosomal subunit protein uS12.